A 1423-amino-acid polypeptide reads, in one-letter code: Autophagy-related protein 11 (1423 aa).

2 coiled-coil regions span residues 551–589 (DDELLRSLQDDKSKLESKLKTAESRVRRLEDLLHRQSQA) and 625–978 (SEGT…ASEL). 2 disordered regions span residues 583–660 (LHRQ…SNRA) and 1028–1048 (RAERAAQNPNDSSDPGTSLRK). Residues 585-602 (RQSQASRPGNLFQPQTNS) are compositionally biased toward polar residues. Basic and acidic residues predominate over residues 631 to 648 (LLRRISELENELREEKQR). 2 stretches are compositionally biased toward polar residues: residues 650–660 (SRIQNDLSNRA) and 1034–1047 (QNPNDSSDPGTSLR). Residues 1102 to 1130 (HRIKEVEHKARKWQKEARSYRDRAHIAQK) adopt a coiled-coil conformation. The disordered stretch occupies residues 1327 to 1423 (SLRAAAPETP…DYTYESPGKK (97 aa)). Residues 1383-1395 (KTAEPRRMLDRQE) show a composition bias toward basic and acidic residues.

Belongs to the ATG11 family. Homodimer and potential homooligomers. Interacts with ATG1 kinase and the ATG19 and ATG34 cargo protein transporters. Interacts with ATG9, ATG17 and ATG20.

Its subcellular location is the preautophagosomal structure membrane. It localises to the vacuole membrane. Functionally, involved in cytoplasm to vacuole transport (Cvt), pexophagy, mitophagy and nucleophagy. Recruits mitochondria for their selective degradation via autophagy (mitophagy) during starvation, through its interaction with ATG32. Works as scaffold proteins that recruit ATG proteins to the pre-autophagosome (PAS), the site of vesicle/autophagosome formation. Required for ATG9 anterograde transport from the mitochondria to the PAS. Also recruits the ATG19-prAPE1 complex to the PAS. Required for the Cvt vesicles completion. Plays a role in morphological differentiation and cephalosporin production. In Hapsidospora chrysogena (Acremonium chrysogenum), this protein is Autophagy-related protein 11.